The following is a 144-amino-acid chain: Arsenate reductase ArsI1 (144 aa).

Cysteine 14 acts as the Nucleophile; cysteine thioarsenate intermediate in catalysis.

The protein belongs to the ArsC family.

It catalyses the reaction [glutaredoxin]-dithiol + arsenate + glutathione + H(+) = glutathionyl-S-S-[glutaredoxin] + arsenite + H2O. Functionally, catalyzes the reduction of arsenate [As(V)] to arsenite [As(III)]. Does not constitute the major arsenate reductase in cells: essential only in the absence of ArsC (AC P74313). The polypeptide is Arsenate reductase ArsI1 (Synechocystis sp. (strain ATCC 27184 / PCC 6803 / Kazusa)).